The sequence spans 365 residues: Growth-regulating factor 7 (365 aa).

In terms of domain architecture, QLQ spans 59 to 94; it reads PFTNAQLKELERQAMIYKYMIASIPVPFDLLVSSPS. Residues 107–151 enclose the WRC domain; that stretch reads DLEPGRCRRTDGKKWRCAKEVVSNHKYCEKHLHRGRPRSRKHVEP. 2 consecutive short sequence motifs (bipartite nuclear localization signal) follow at residues 112-122 and 140-147; these read RCRRTDGKKWR and RGRPRSRK. Over residues 137–147 the composition is skewed to basic residues; that stretch reads HLHRGRPRSRK. 2 disordered regions span residues 137–187 and 332–365; these read HLHR…TLEP and IESYSLMETPTPSSSPSRVMKKMTSSVSDESSQV. The span at 337–365 shows a compositional bias: polar residues; the sequence is LMETPTPSSSPSRVMKKMTSSVSDESSQV.

It belongs to the GRF family.

The protein localises to the nucleus. In terms of biological role, transcription activator that plays a role in the regulation of cell expansion in leaf and cotyledons tissues. Component of a network formed by miR396, the GRFs and their interacting factors (GIFs) acting in the regulation of meristem function, at least partially through the control of cell proliferation. The sequence is that of Growth-regulating factor 7 (GRF7) from Arabidopsis thaliana (Mouse-ear cress).